The chain runs to 712 residues: Anaerobic ribonucleoside-triphosphate reductase (712 aa).

An ATP-cone domain is found at Pro-3–Arg-92. The region spanning Lys-583–Asn-708 is the Glycine radical domain. Residues Cys-644, Cys-647, Cys-662, and Cys-665 each contribute to the Zn(2+) site. Position 681 is a glycine radical (Gly-681).

Belongs to the anaerobic ribonucleoside-triphosphate reductase family. Forms a tetramer composed of two NrdD and two NrdG subunits.

It carries out the reaction a ribonucleoside 5'-triphosphate + formate + H(+) = a 2'-deoxyribonucleoside 5'-triphosphate + CO2 + H2O. Its activity is regulated as follows. Activated under anaerobic conditions by NrdG, a tightly associated activase. Activation involves the formation of a glycyl radical at Gly-681. Functionally, catalyzes the conversion of ribonucleotides into deoxyribonucleotides, which are required for DNA synthesis and repair. This Salmonella typhimurium (strain LT2 / SGSC1412 / ATCC 700720) protein is Anaerobic ribonucleoside-triphosphate reductase (nrdD).